The primary structure comprises 93 residues: MQRGAVLLGVVAFLALWPQAGAEPYNLNDPDVRAMINDGRKLMDTCAKANHYIADRWSTYRIEYLEDKGLYHRMLRELVPCLNNFLRTRQEAP.

The signal sequence occupies residues 1–22 (MQRGAVLLGVVAFLALWPQAGA). Residues 23 to 33 (EPYNLNDPDVR) constitute a propeptide that is removed on maturation.

Belongs to the conotoxin F superfamily. Post-translationally, contains 4 disulfide bonds. Expressed by the venom duct.

It is found in the secreted. This Conus victoriae (Queen Victoria cone) protein is Conotoxin F_Vc1.